The following is a 319-amino-acid chain: Methionyl-tRNA formyltransferase (319 aa).

116 to 119 (SLLP) provides a ligand contact to (6S)-5,6,7,8-tetrahydrofolate.

Belongs to the Fmt family.

The enzyme catalyses L-methionyl-tRNA(fMet) + (6R)-10-formyltetrahydrofolate = N-formyl-L-methionyl-tRNA(fMet) + (6S)-5,6,7,8-tetrahydrofolate + H(+). In terms of biological role, attaches a formyl group to the free amino group of methionyl-tRNA(fMet). The formyl group appears to play a dual role in the initiator identity of N-formylmethionyl-tRNA by promoting its recognition by IF2 and preventing the misappropriation of this tRNA by the elongation apparatus. The sequence is that of Methionyl-tRNA formyltransferase from Wigglesworthia glossinidia brevipalpis.